The sequence spans 173 residues: Putative metal-dependent hydrolase BC_2708 (173 aa).

3 residues coordinate Zn(2+): His65, His156, and His160.

It belongs to the metal hydrolase YfiT family. Homodimer. The cofactor is Zn(2+).

The protein localises to the cytoplasm. Possible metal-dependent hydrolase. The protein is Putative metal-dependent hydrolase BC_2708 of Bacillus cereus (strain ATCC 14579 / DSM 31 / CCUG 7414 / JCM 2152 / NBRC 15305 / NCIMB 9373 / NCTC 2599 / NRRL B-3711).